Reading from the N-terminus, the 349-residue chain is Protein O-mannose kinase (349 aa).

Over 1 to 19 (MGQQHGARNGLTHRELPRG) the chain is Cytoplasmic. Residues 20–42 (MGLLLAMALMNVVLYVCLDHLFI) form a helical; Signal-anchor for type II membrane protein membrane-spanning segment. Topologically, residues 43–349 (SPGRATEDPR…TVMSQTKEML (307 aa)) are lumenal. 3 N-linked (GlcNAc...) asparagine glycosylation sites follow: asparagine 66, asparagine 164, and asparagine 219. In terms of domain architecture, Protein kinase spans 80 to 349 (VRQLKLVGEG…TVMSQTKEML (270 aa)).

Belongs to the protein kinase superfamily. Ser/Thr protein kinase family. STKL subfamily.

Its subcellular location is the endoplasmic reticulum membrane. It catalyses the reaction 3-O-[beta-D-GalNAc-(1-&gt;3)-beta-D-GlcNAc-(1-&gt;4)-alpha-D-Man]-L-Thr-[protein] + ATP = 3-O-[beta-D-GalNAc-(1-&gt;3)-beta-D-GlcNAc-(1-&gt;4)-(O-6-P-alpha-D-Man)]-Thr-[protein] + ADP + H(+). Protein O-mannose kinase that specifically mediates phosphorylation at the 6-position of an O-mannose of the trisaccharide (N-acetylgalactosamine (GalNAc)-beta-1,3-N-acetylglucosamine (GlcNAc)-beta-1,4-mannose) to generate phosphorylated O-mannosyl trisaccharide (N-acetylgalactosamine-beta-1,3-N-acetylglucosamine-beta-1,4-(phosphate-6-)mannose). Phosphorylated O-mannosyl trisaccharide is a carbohydrate structure present in alpha-dystroglycan (DAG1), which is required for binding laminin G-like domain-containing extracellular proteins with high affinity. Only shows kinase activity when the GalNAc-beta-3-GlcNAc-beta-terminus is linked to the 4-position of O-mannose, suggesting that this disaccharide serves as the substrate recognition motif. The polypeptide is Protein O-mannose kinase (Pomk) (Rattus norvegicus (Rat)).